The chain runs to 218 residues: Very-long-chain (3R)-3-hydroxyacyl-CoA dehydratase (218 aa).

The Cytoplasmic portion of the chain corresponds to 1 to 6; that stretch reads MKTYLS. The chain crosses the membrane as a helical span at residues 7–29; sequence IYYLIQFCGHSWIFTNMTTRFLF. Residues 30-38 lie on the Lumenal side of the membrane; the sequence is FGQDAFADT. The chain crosses the membrane as a helical span at residues 39–61; it reads FYSIGLVMQGCQLLSILELAHIL. The Cytoplasmic portion of the chain corresponds to 62–67; it reads LGVEQN. The chain crosses the membrane as a helical span at residues 68–87; that stretch reads GFLPMFLQVAERFIILFVVI. Over 88–96 the chain is Lumenal; the sequence is TSQEEVQSK. The chain crosses the membrane as a helical span at residues 97-116; that stretch reads YIVCALFFIWNLWDVIRYPY. The Cytoplasmic segment spans residues 117–136; sequence DMLAAVDTDYSALTWLRHTW. Residues 137 to 159 form a helical membrane-spanning segment; sequence WIVAYPLSVLAEAYTIYESLPYF. Residues Tyr-141 and Glu-148 contribute to the active site. Topologically, residues 160-178 are lumenal; that stretch reads ESLGTYSFKMALPVSLSFH. The chain crosses the membrane as a helical span at residues 179-201; that stretch reads FPYILTLYLVLQPVGMLYICSCL. Residues 202-218 lie on the Cytoplasmic side of the membrane; that stretch reads WSERKQYFQRKLKLKKN.

This sequence belongs to the very long-chain fatty acids dehydratase HACD family.

The protein resides in the endoplasmic reticulum membrane. The catalysed reaction is a very-long-chain (3R)-3-hydroxyacyl-CoA = a very-long-chain (2E)-enoyl-CoA + H2O. It catalyses the reaction (3R)-hydroxyhexadecanoyl-CoA = (2E)-hexadecenoyl-CoA + H2O. Its pathway is lipid metabolism; fatty acid biosynthesis. Functionally, catalyzes the third of the four reactions of the long-chain fatty acids elongation cycle. This endoplasmic reticulum-bound enzymatic process, allows the addition of two carbons to the chain of long- and very long-chain fatty acids/VLCFAs per cycle. This enzyme catalyzes the dehydration of the 3-hydroxyacyl-CoA intermediate into trans-2,3-enoyl-CoA, within each cycle of fatty acid elongation. Thereby, it participates in the production of VLCFAs of different chain lengths that are involved in multiple biological processes as precursors of membrane lipids and lipid mediators. The polypeptide is Very-long-chain (3R)-3-hydroxyacyl-CoA dehydratase (Xenopus laevis (African clawed frog)).